Reading from the N-terminus, the 245-residue chain is Tyrosine recombinase XerD-like (245 aa).

A Core-binding (CB) domain is found at 1-72 (MITFISKFLA…AVNQFLFFLY (72 aa)). The Tyr recombinase domain occupies 90–245 (PLLTPAYQEV…PVTLEKYFKN (156 aa)). Active-site residues include Lys151 and Arg210. Tyr242 functions as the O-(3'-phospho-DNA)-tyrosine intermediate in the catalytic mechanism.

The protein belongs to the 'phage' integrase family. XerD-like subfamily.

It localises to the cytoplasm. Putative tyrosine recombinase. Not involved in the cutting and rejoining of the recombining DNA molecules on dif(SL) site. The polypeptide is Tyrosine recombinase XerD-like (Streptococcus mutans serotype c (strain ATCC 700610 / UA159)).